A 268-amino-acid chain; its full sequence is MMLENKAFEPRPAHSAPTVDKMALTGVNFYYGDAHAIRDVTLSFPERQVSALIGPSGCGKSTLLRILNRIYMLYPKMRATGSVTLDGQNILDPGYSMNELRARVGMVFQKPVPFPMSIYDNIAYGIRHHERISKAEMDVRVEQALRSAALWDEVKDKLKGSGLGLSGGQQQRLCIARAVALRPEVLLLDEPTSALDPISTAKVEELVARLKTDFTIVIVTHNMQQASRISDNTAFMYLGELVEYGPTAEIFQSPKVKRTEDYITGRYG.

The ABC transporter domain occupies 22–263; the sequence is MALTGVNFYY…PKVKRTEDYI (242 aa). 54–61 contributes to the ATP binding site; it reads GPSGCGKS.

This sequence belongs to the ABC transporter superfamily. Phosphate importer (TC 3.A.1.7) family. The complex is composed of two ATP-binding proteins (PstB), two transmembrane proteins (PstC and PstA) and a solute-binding protein (PstS).

It localises to the cell inner membrane. It catalyses the reaction phosphate(out) + ATP + H2O = ADP + 2 phosphate(in) + H(+). Part of the ABC transporter complex PstSACB involved in phosphate import. Responsible for energy coupling to the transport system. The sequence is that of Phosphate import ATP-binding protein PstB 2 from Rhizobium johnstonii (strain DSM 114642 / LMG 32736 / 3841) (Rhizobium leguminosarum bv. viciae).